The sequence spans 718 residues: Protein Smaug homolog 1 (718 aa).

The residue at position 168 (Ser168) is a Phosphoserine. 3 disordered regions span residues 278–323 (ARGP…EEGS), 416–474 (KAYS…LQPH), and 572–601 (NRGF…QYQI). The SAM domain maps to 323–391 (SGMKDVPAWL…ERQNLLKSLE (69 aa)). At Ser420 the chain carries Phosphoserine. Phosphothreonine is present on Thr424. Over residues 453 to 466 (GAAATGATATPSAG) the composition is skewed to low complexity. An Omega-N-methylarginine modification is found at Arg573. Ser580 carries the post-translational modification Phosphoserine.

The protein belongs to the SMAUG family.

It localises to the cytoplasm. It is found in the cell projection. The protein resides in the dendrite. Its subcellular location is the synapse. The protein localises to the synaptosome. Acts as a translational repressor of SRE-containing messengers. This Homo sapiens (Human) protein is Protein Smaug homolog 1 (SAMD4A).